The following is a 639-amino-acid chain: Chaperone protein DnaK (639 aa).

Thr-198 is modified (phosphothreonine; by autocatalysis). Residues 603-618 show a composition bias toward low complexity; that stretch reads AKAQTQGGAQEGAAKQ. Positions 603 to 639 are disordered; the sequence is AKAQTQGGAQEGAAKQSNATADDVVDAEFEEVKDDKK. Positions 625–639 are enriched in acidic residues; it reads DVVDAEFEEVKDDKK.

The protein belongs to the heat shock protein 70 family.

Acts as a chaperone. In Shewanella sp. (strain MR-7), this protein is Chaperone protein DnaK.